Reading from the N-terminus, the 446-residue chain is Maturase K (446 aa).

It belongs to the intron maturase 2 family. MatK subfamily.

The protein resides in the plastid. Its subcellular location is the chloroplast. In terms of biological role, usually encoded in the trnK tRNA gene intron. Probably assists in splicing its own and other chloroplast group II introns. This chain is Maturase K, found in Phalaenopsis aphrodite subsp. formosana (Moth orchid).